The primary structure comprises 79 residues: Calcium/calmodulin-dependent protein kinase II inhibitor 2 (79 aa).

A disordered region spans residues 1–21 (MSEILPYGEDKMGRFGADPEG). The segment at 43 to 69 (KRPPKLGQIGRAKRVVIEDDRIDDVLK) is inhibitory domain.

The protein belongs to the CAMK2N family. In terms of assembly, interacts with CAMK2A and CAMK2B in the presence of Ca(2+)/calmodulin or after autophosphorylation.

It is found in the nucleus. The protein resides in the cytoplasm. The protein localises to the cytosol. Its subcellular location is the synapse. In terms of biological role, potent and specific cellular inhibitor of CaM-kinase II (CAMK2). Traps Ca(2+)/calmodulin on CAMK2. The polypeptide is Calcium/calmodulin-dependent protein kinase II inhibitor 2 (Camk2n2) (Mus musculus (Mouse)).